Reading from the N-terminus, the 413-residue chain is Gamma-glutamyl phosphate reductase (413 aa).

The protein belongs to the gamma-glutamyl phosphate reductase family.

Its subcellular location is the cytoplasm. It catalyses the reaction L-glutamate 5-semialdehyde + phosphate + NADP(+) = L-glutamyl 5-phosphate + NADPH + H(+). It participates in amino-acid biosynthesis; L-proline biosynthesis; L-glutamate 5-semialdehyde from L-glutamate: step 2/2. Functionally, catalyzes the NADPH-dependent reduction of L-glutamate 5-phosphate into L-glutamate 5-semialdehyde and phosphate. The product spontaneously undergoes cyclization to form 1-pyrroline-5-carboxylate. The chain is Gamma-glutamyl phosphate reductase from Leuconostoc mesenteroides subsp. mesenteroides (strain ATCC 8293 / DSM 20343 / BCRC 11652 / CCM 1803 / JCM 6124 / NCDO 523 / NBRC 100496 / NCIMB 8023 / NCTC 12954 / NRRL B-1118 / 37Y).